We begin with the raw amino-acid sequence, 607 residues long: DNA mismatch repair protein MutL (607 aa).

Belongs to the DNA mismatch repair MutL/HexB family.

Functionally, this protein is involved in the repair of mismatches in DNA. It is required for dam-dependent methyl-directed DNA mismatch repair. May act as a 'molecular matchmaker', a protein that promotes the formation of a stable complex between two or more DNA-binding proteins in an ATP-dependent manner without itself being part of a final effector complex. The protein is DNA mismatch repair protein MutL of Anaeromyxobacter dehalogenans (strain 2CP-1 / ATCC BAA-258).